A 161-amino-acid chain; its full sequence is Cyclic pyranopterin monophosphate synthase (161 aa).

Substrate is bound by residues 76-78 (MCH) and 114-115 (ME). Aspartate 129 is a catalytic residue.

The protein belongs to the MoaC family. Homohexamer; trimer of dimers.

The catalysed reaction is (8S)-3',8-cyclo-7,8-dihydroguanosine 5'-triphosphate = cyclic pyranopterin phosphate + diphosphate. The protein operates within cofactor biosynthesis; molybdopterin biosynthesis. In terms of biological role, catalyzes the conversion of (8S)-3',8-cyclo-7,8-dihydroguanosine 5'-triphosphate to cyclic pyranopterin monophosphate (cPMP). This is Cyclic pyranopterin monophosphate synthase from Clostridium acetobutylicum (strain ATCC 824 / DSM 792 / JCM 1419 / IAM 19013 / LMG 5710 / NBRC 13948 / NRRL B-527 / VKM B-1787 / 2291 / W).